The following is a 364-amino-acid chain: Tyrosyl-DNA phosphodiesterase 2 (364 aa).

Methionine 1 is subject to N-acetylmethionine. The segment covering 1-10 (MERNSGPEAG) has biased composition (low complexity). A disordered region spans residues 1–21 (MERNSGPEAGPEAELEEGEPE). Residue lysine 23 forms a Glycyl lysine isopeptide (Lys-Gly) (interchain with G-Cter in SUMO2) linkage. The segment at 68–108 (ESASESRPESLSEPGSCVDLTKEETNDSISSKTSTSEDKSV) is disordered. Threonine 88 and threonine 92 each carry phosphothreonine; by ACVR1B. Position 95 is a phosphoserine (serine 95). The interval 122–126 (NIDGL) is interaction with 5' end of substrate DNA. Residues aspartate 124 and glutamate 154 each contribute to the Mg(2+) site. Residues 228-233 (HLESTR) form an interaction with 5' end of substrate DNA region. Catalysis depends on aspartate 264, which acts as the Proton donor/acceptor. The segment at 266-268 (NLR) is interaction with 5' end of substrate DNA.

This sequence belongs to the CCR4/nocturin family. Interacts with TRAF2, TRAF3, TRAF5, TRAF6, TNFRSF8/CD30, TNFRSF5/CD40, TNFRSF1B/TNF-R75, ETS1, ETS2, FLI1, SMAD3 and ACVR1B/ALK4. Mg(2+) serves as cofactor. The cofactor is Mn(2+). Ubiquitinated by TRAF6.

Its subcellular location is the nucleus. The protein localises to the PML body. It is found in the nucleolus. The protein resides in the cytoplasm. Functionally, DNA repair enzyme that can remove a variety of covalent adducts from DNA through hydrolysis of a 5'-phosphodiester bond, giving rise to DNA with a free 5' phosphate. Catalyzes the hydrolysis of dead-end complexes between DNA and the topoisomerase 2 (TOP2) active site tyrosine residue. The 5'-tyrosyl DNA phosphodiesterase activity can enable the repair of TOP2-induced DNA double-strand breaks/DSBs without the need for nuclease activity, creating a 'clean' DSB with 5'-phosphate termini that are ready for ligation. Thereby, protects the transcription of many genes involved in neurological development and maintenance from the abortive activity of TOP2. Hydrolyzes 5'-phosphoglycolates on protruding 5' ends on DSBs due to DNA damage by radiation and free radicals. Has preference for single-stranded DNA or duplex DNA with a 4 base pair overhang as substrate. Also has 3'-tyrosyl DNA phosphodiesterase activity, but less efficiently and much slower than TDP1. Constitutes the major if not only 5'-tyrosyl-DNA phosphodiesterase in cells. Also acts as an adapter by participating in the specific activation of MAP3K7/TAK1 in response to TGF-beta: associates with components of the TGF-beta receptor-TRAF6-TAK1 signaling module and promotes their ubiquitination dependent complex formation. Involved in non-canonical TGF-beta induced signaling routes. May also act as a negative regulator of ETS1 and may inhibit NF-kappa-B activation. Acts as a regulator of ribosome biogenesis following stress. The polypeptide is Tyrosyl-DNA phosphodiesterase 2 (TDP2) (Bos taurus (Bovine)).